Consider the following 705-residue polypeptide: Pentatricopeptide repeat-containing protein At1g09410, mitochondrial (705 aa).

Residues 1 to 11 (MKSQILLRRTY) constitute a mitochondrion transit peptide. PPR repeat units follow at residues 16 to 46 (PPPT…CDSK), 47 to 77 (SISS…MPDR), 78 to 112 (NIIS…NVVS), 113 to 139 (WTAL…MPEK), 140 to 170 (NKVS…IPDK), 171 to 205 (DNIA…SVIT), 206 to 232 (WTTM…MPEK), 233 to 267 (TEVS…PVIA), 268 to 294 (CNAM…MKER), 295 to 329 (NDAS…GVRP), 330 to 364 (TFPT…QFDV), 365 to 395 (DVYV…FPSK), 396 to 430 (DIIM…GSTK), 432 to 462 (NEVT…MESV), and 468 to 498 (ITAH…MTVE). The type E motif stretch occupies residues 503 to 578 (VWGSLLGACR…SPGCSWTEVE (76 aa)). The tract at residues 579-610 (NKVHAFTRGGINSHPEQESILKILDELDGLLR) is type E(+) motif. Positions 611 to 705 (EAGYNPDCSY…NGECSCKDYW (95 aa)) are type DYW motif.

It belongs to the PPR family. PCMP-H subfamily.

It localises to the mitochondrion. This Arabidopsis thaliana (Mouse-ear cress) protein is Pentatricopeptide repeat-containing protein At1g09410, mitochondrial (PCMP-H18).